A 329-amino-acid polypeptide reads, in one-letter code: Serpentine receptor class alpha-8 (329 aa).

6 helical membrane-spanning segments follow: residues 26-46, 60-80, 141-161, 187-207, 231-251, and 273-293; these read VDLITSFFTYMLSIIAIKMVL, FLNIFYANLYQIVYSIDVVVI, IFVGSFIAIVVMISTTSTGKL, TIHFYISTVVSLFNLAASVAL, VIESTETICFLNFTQFVFMFI, and FWVVWCYTVPFIALTFPLLLI.

Belongs to the nematode receptor-like protein sra family.

The protein localises to the membrane. This is Serpentine receptor class alpha-8 (sra-8) from Caenorhabditis elegans.